Consider the following 124-residue polypeptide: Snaclec rhodocetin subunit delta (124 aa).

3 disulfide bridges follow: Cys-1–Cys-12, Cys-29–Cys-120, and Cys-95–Cys-112. The C-type lectin domain maps to 8 to 121 (YNGYCYRVFS…CEKTVSFVCK (114 aa)).

Belongs to the snaclec family. In terms of assembly, heterotetramer of subunit alpha, beta, gamma and delta; only the gamma and the delta subunits are disulfide-linked. Alpha-beta heterodimer and gamma-delta heterodimer associate orthogonally, giving a cruciform conformation. This heterotetramer may covalently dimerizes thanks to the gamma subunit. Expressed by the venom gland.

Its subcellular location is the secreted. Functionally, potent inhibitor of collagen-induced platelet aggregation. It acts by binding to the integrin alpha2A domain and blocks collagen binding to integrin alpha-2/beta-1 (ITGA2/ITGB1). The gamma/delta subunits mainly contribute to this activity. In Calloselasma rhodostoma (Malayan pit viper), this protein is Snaclec rhodocetin subunit delta.